The chain runs to 263 residues: Probable elongation factor 1-beta/1-delta 2 (263 aa).

Ser-2 carries the N-acetylserine modification. Residues 112–153 (QGQTSSVAAPAAAPAAAKEEAAGDDDFDLFGSEDEEEDEEKK) form a disordered region. Acidic residues predominate over residues 133–150 (AGDDDFDLFGSEDEEEDE).

This sequence belongs to the EF-1-beta/EF-1-delta family. As to quaternary structure, EF-1 is composed of 4 subunits: alpha, beta, delta, and gamma.

Functionally, EF-1-beta and EF-1-delta stimulate the exchange of GDP bound to EF-1-alpha to GTP. The sequence is that of Probable elongation factor 1-beta/1-delta 2 from Caenorhabditis elegans.